The chain runs to 249 residues: Bax inhibitor 1 (249 aa).

The next 6 helical transmembrane spans lie at 39–59 (LVYL…YLHV), 65–85 (GMLT…VPVF), 93–113 (ILLA…KLAV), 119–139 (ILVT…CAAI), 151–171 (GLLS…SIFG), and 213–233 (HALT…VIML).

The protein belongs to the BI1 family. In terms of tissue distribution, ubiquitous.

The protein localises to the membrane. Its function is as follows. Suppressor of apoptosis. The protein is Bax inhibitor 1 (BI1) of Oryza sativa subsp. japonica (Rice).